The primary structure comprises 264 residues: Tryptophan synthase alpha chain (264 aa).

Catalysis depends on proton acceptor residues glutamate 49 and aspartate 60.

The protein belongs to the TrpA family. As to quaternary structure, tetramer of two alpha and two beta chains.

It carries out the reaction (1S,2R)-1-C-(indol-3-yl)glycerol 3-phosphate + L-serine = D-glyceraldehyde 3-phosphate + L-tryptophan + H2O. It functions in the pathway amino-acid biosynthesis; L-tryptophan biosynthesis; L-tryptophan from chorismate: step 5/5. Its function is as follows. The alpha subunit is responsible for the aldol cleavage of indoleglycerol phosphate to indole and glyceraldehyde 3-phosphate. The sequence is that of Tryptophan synthase alpha chain from Picosynechococcus sp. (strain ATCC 27264 / PCC 7002 / PR-6) (Agmenellum quadruplicatum).